Here is a 220-residue protein sequence, read N- to C-terminus: DNA-directed RNA polymerase subunit alpha (220 aa).

This sequence belongs to the RNA polymerase alpha chain family. In terms of assembly, in plastids the minimal PEP RNA polymerase catalytic core is composed of four subunits: alpha, beta, beta', and beta''. When a (nuclear-encoded) sigma factor is associated with the core the holoenzyme is formed, which can initiate transcription.

The protein resides in the plastid. The enzyme catalyses RNA(n) + a ribonucleoside 5'-triphosphate = RNA(n+1) + diphosphate. Its function is as follows. DNA-dependent RNA polymerase catalyzes the transcription of DNA into RNA using the four ribonucleoside triphosphates as substrates. The sequence is that of DNA-directed RNA polymerase subunit alpha (rpoA) from Euglena longa (Euglenophycean alga).